The sequence spans 257 residues: 5-keto-4-deoxy-D-glucarate aldolase (257 aa).

His51 serves as the catalytic Proton acceptor. Residue Gln152 participates in substrate binding. Residue Glu154 coordinates Mg(2+). Substrate contacts are provided by Ser179 and Asp180. A Mg(2+)-binding site is contributed by Asp180.

It belongs to the HpcH/HpaI aldolase family. KDGluc aldolase subfamily. As to quaternary structure, homohexamer; trimer of dimers. Requires Mg(2+) as cofactor.

It catalyses the reaction 5-dehydro-4-deoxy-D-glucarate = 2-hydroxy-3-oxopropanoate + pyruvate. The catalysed reaction is 2-dehydro-3-deoxy-D-glucarate = 2-hydroxy-3-oxopropanoate + pyruvate. It functions in the pathway carbohydrate acid metabolism; galactarate degradation; D-glycerate from galactarate: step 2/3. Its function is as follows. Catalyzes the reversible retro-aldol cleavage of both 5-keto-4-deoxy-D-glucarate and 2-keto-3-deoxy-D-glucarate to pyruvate and tartronic semialdehyde. This Citrobacter koseri (strain ATCC BAA-895 / CDC 4225-83 / SGSC4696) protein is 5-keto-4-deoxy-D-glucarate aldolase.